Consider the following 552-residue polypeptide: Iduronate 2-sulfatase (552 aa).

The signal sequence occupies residues 1-29 (MSPPPPPPIWRQLSFSLLLGSFCIALESA). Positions 30–35 (AQGNSA) are excised as a propeptide. 3 residues coordinate Ca(2+): aspartate 47, aspartate 48, and cysteine 86. The Nucleophile role is filled by cysteine 86. Cysteine 86 is subject to 3-oxoalanine (Cys). An N-linked (GlcNAc...) asparagine glycan is attached at asparagine 117. Histidine 140 is an active-site residue. N-linked (GlcNAc...) asparagine glycosylation occurs at asparagine 146. Cysteines 173 and 186 form a disulfide. 2 N-linked (GlcNAc...) asparagine glycosylation sites follow: asparagine 248 and asparagine 282. Residues aspartate 336 and histidine 337 each contribute to the Ca(2+) site. The cysteines at positions 424 and 434 are disulfide-linked. N-linked (GlcNAc...) asparagine glycosylation is found at asparagine 515 and asparagine 539.

Belongs to the sulfatase family. As to quaternary structure, monomer. The 58-kDa mature form is composed of two chains resulting from proteolitic processing, the 42-kDa chain and the 14-kDa chain that remain stably associated and form the 58-kDa intermediate form which is enzymatically active. The cofactor is Ca(2+). Synthesized as a 75-kDa precursor form in the endoplasmic reticulum (ER), and then processed by proteolytic cleavage through various intermediates to yield a 55-kDa mature form, with the release of an 18 kDa polypeptide. Post-translationally, the conversion to 3-oxoalanine (also known as C-formylglycine, FGly), of a serine or cysteine residue in prokaryotes and of a cysteine residue in eukaryotes, is critical for catalytic activity. Found to be expressed in alpha and beta pancreatic cells.

It localises to the lysosome. The enzyme catalyses Hydrolysis of the 2-sulfate groups of the L-iduronate 2-sulfate units of dermatan sulfate, heparan sulfate and heparin.. In terms of biological role, lysosomal enzyme involved in the degradation pathway of dermatan sulfate and heparan sulfate. This chain is Iduronate 2-sulfatase (Ids), found in Mus musculus (Mouse).